Here is a 60-residue protein sequence, read N- to C-terminus: Myrmicitoxin(1)-Pr4a (60 aa).

An N-terminal signal peptide occupies residues 1-23 (MKAIIFLFAVLTVVAIIIPIISG). The propeptide occupies 24-33 (EPNAGPHAAS). The residue at position 59 (glutamine 59) is a Glutamine amide.

This sequence belongs to the formicidae venom clade 2 family. Expressed by the venom gland.

The protein localises to the secreted. Toxin that causes a rapid and irreversible paralysis when intrathoracically injected into insects (blowflies). Does not cause spontaneous nocifensive behaviors by intraplantar injection in mice. The sequence is that of Myrmicitoxin(1)-Pr4a from Pogonomyrmex rugosus (Desert harvester ant).